Consider the following 1102-residue polypeptide: Putative ISWI chromatin-remodeling complex subunit YPL216W (1102 aa).

In terms of domain architecture, WAC spans 23–131 (ETPWVIKESS…DTVCLKTIQK (109 aa)). The segment at 271–301 (ELYTPLTIPPESDVEPADWKETSETSETSET) is disordered. One can recognise a DDT domain in the interval 375–435 (QFPTERLLVV…FLKTYNSKGS (61 aa)). Residues 673–743 (CNGIRLKLDS…EDIAFLEAKL (71 aa)) are a coiled coil.

The protein localises to the nucleus. Functionally, may be required for the activity of an ISWI chromatin-remodeling complex. This is Putative ISWI chromatin-remodeling complex subunit YPL216W from Saccharomyces cerevisiae (strain ATCC 204508 / S288c) (Baker's yeast).